Here is a 72-residue protein sequence, read N- to C-terminus: Large ribosomal subunit protein uL29 (72 aa).

This sequence belongs to the universal ribosomal protein uL29 family.

The polypeptide is Large ribosomal subunit protein uL29 (Chlamydia trachomatis serovar L2 (strain ATCC VR-902B / DSM 19102 / 434/Bu)).